A 286-amino-acid chain; its full sequence is Flagellar filament 33 kDa core protein (286 aa).

It belongs to the bacterial flagellin family. As to quaternary structure, the flagellum consists of an outer layer composed of repeating units of FlaA around a core that contains several antigenically related polypeptides.

It is found in the periplasmic flagellum. Its subcellular location is the periplasm. In terms of biological role, component of the core of the flagella. The chain is Flagellar filament 33 kDa core protein from Treponema phagedenis.